A 62-amino-acid polypeptide reads, in one-letter code: uncharacterized protein (62 aa).

Polar residues predominate over residues 1–13 (MGESKSPQESSSE). A disordered region spans residues 1 to 62 (MGESKSPQES…SRREFRRKSG (62 aa)). The segment covering 14–28 (GETKRKFREALDRKM) has biased composition (basic and acidic residues).

This is an uncharacterized protein from Mycobacterium tuberculosis (strain ATCC 25618 / H37Rv).